The primary structure comprises 650 residues: Chaperone protein DnaK (650 aa).

Position 200 is a phosphothreonine; by autocatalysis (T200).

Belongs to the heat shock protein 70 family.

Acts as a chaperone. The polypeptide is Chaperone protein DnaK (Paraburkholderia phytofirmans (strain DSM 17436 / LMG 22146 / PsJN) (Burkholderia phytofirmans)).